The following is a 445-amino-acid chain: Cyclic GMP-AMP synthase-like receptor 1 (445 aa).

Glu70, Asp72, and Asp186 together coordinate Mg(2+). An ATP-binding site is contributed by 70-72 (EYD). GTP is bound by residues Asp186 and 232 to 239 (RTSFYEAE). Residues 236 to 239 (YEAE), Lys257, and 270 to 274 (SYHIK) each bind ATP. The interval 357–445 (LNDDNENSVH…KSKTTTPKPS (89 aa)) is disordered. Positions 377 to 398 (QKMEKTSTESEQKKPTETKPNA) are enriched in basic and acidic residues. The segment covering 435-445 (TKSKTTTPKPS) has biased composition (low complexity).

This sequence belongs to the mab-21 family. Requires Mg(2+) as cofactor. The cofactor is Mn(2+).

It catalyses the reaction GTP + ATP = 3',2'-cGAMP + 2 diphosphate. The catalysed reaction is GTP + ATP = pppA(2'-5')pG + diphosphate. It carries out the reaction pppA(2'-5')pG = 3',2'-cGAMP + diphosphate. The enzyme activity is specifically activated by double-stranded RNA (dsRNA). Its function is as follows. Nucleotidyltransferase that catalyzes the formation of cyclic GMP-AMP (3',2'-cGAMP) from ATP and GTP and plays a key role in innate immunity. Synthesizes 3',2'-cGAMP in a two-step reaction through production of the linear intermediate pppA(2'-5')pG. Acts as a key sensor of double-stranded RNA (dsRNA), the presence of dsRNA in the cytoplasm being a danger signal that triggers the immune responses. Directly binds dsRNA, activating the nucleotidyltransferase activity, leading to synthesis of 3',2'-cGAMP, a second messenger that binds to and activates Sting, thereby triggering the antiviral immune response via activation of the NF-kappa-B transcription factor Rel (Relish). The polypeptide is Cyclic GMP-AMP synthase-like receptor 1 (Drosophila erecta (Fruit fly)).